The chain runs to 109 residues: Large ribosomal subunit protein uL24 (109 aa).

Belongs to the universal ribosomal protein uL24 family. As to quaternary structure, part of the 50S ribosomal subunit.

In terms of biological role, one of two assembly initiator proteins, it binds directly to the 5'-end of the 23S rRNA, where it nucleates assembly of the 50S subunit. Its function is as follows. One of the proteins that surrounds the polypeptide exit tunnel on the outside of the subunit. In Rickettsia africae (strain ESF-5), this protein is Large ribosomal subunit protein uL24.